The sequence spans 371 residues: Bifunctional enzyme IspD/IspF (371 aa).

A 2-C-methyl-D-erythritol 4-phosphate cytidylyltransferase region spans residues Met-1 to Ile-210. The 2-C-methyl-D-erythritol 2,4-cyclodiphosphate synthase stretch occupies residues Phe-211–Leu-371. A divalent metal cation contacts are provided by Asp-217 and His-219. 4-CDP-2-C-methyl-D-erythritol 2-phosphate-binding positions include Asp-217–His-219 and His-243–Ser-244. A divalent metal cation is bound at residue His-251. Residues Asp-265–Gly-267, Tyr-270–Asp-274, Ala-309–Lys-315, Thr-341–Glu-344, Phe-348, and Arg-351 each bind 4-CDP-2-C-methyl-D-erythritol 2-phosphate.

The protein in the N-terminal section; belongs to the IspD/TarI cytidylyltransferase family. IspD subfamily. In the C-terminal section; belongs to the IspF family. The cofactor is a divalent metal cation.

It carries out the reaction 2-C-methyl-D-erythritol 4-phosphate + CTP + H(+) = 4-CDP-2-C-methyl-D-erythritol + diphosphate. The enzyme catalyses 4-CDP-2-C-methyl-D-erythritol 2-phosphate = 2-C-methyl-D-erythritol 2,4-cyclic diphosphate + CMP. Its pathway is isoprenoid biosynthesis; isopentenyl diphosphate biosynthesis via DXP pathway; isopentenyl diphosphate from 1-deoxy-D-xylulose 5-phosphate: step 2/6. It participates in isoprenoid biosynthesis; isopentenyl diphosphate biosynthesis via DXP pathway; isopentenyl diphosphate from 1-deoxy-D-xylulose 5-phosphate: step 4/6. Functionally, bifunctional enzyme that catalyzes the formation of 4-diphosphocytidyl-2-C-methyl-D-erythritol from CTP and 2-C-methyl-D-erythritol 4-phosphate (MEP) (IspD), and catalyzes the conversion of 4-diphosphocytidyl-2-C-methyl-D-erythritol 2-phosphate (CDP-ME2P) to 2-C-methyl-D-erythritol 2,4-cyclodiphosphate (ME-CPP) with a corresponding release of cytidine 5-monophosphate (CMP) (IspF). This chain is Bifunctional enzyme IspD/IspF, found in Campylobacter jejuni subsp. jejuni serotype O:2 (strain ATCC 700819 / NCTC 11168).